The sequence spans 537 residues: Glutamyl-tRNA(Gln) amidotransferase subunit A, chloroplastic/mitochondrial (537 aa).

Active-site charge relay system residues include Lys116 and Ser191. Catalysis depends on Ser215, which acts as the Acyl-ester intermediate.

Belongs to the amidase family. GatA subfamily. Subunit of the heterotrimeric GatCAB amidotransferase (AdT) complex, composed of A, B and C subunits.

The protein localises to the mitochondrion. It localises to the plastid. Its subcellular location is the chloroplast stroma. It carries out the reaction L-glutamyl-tRNA(Gln) + L-glutamine + ATP + H2O = L-glutaminyl-tRNA(Gln) + L-glutamate + ADP + phosphate + H(+). Allows the formation of correctly charged Gln-tRNA(Gln) through the transamidation of misacylated Glu-tRNA(Gln) in chloroplasts and mitochondria. The reaction takes place in the presence of glutamine and ATP through an activated gamma-phospho-Glu-tRNA(Gln). In Arabidopsis thaliana (Mouse-ear cress), this protein is Glutamyl-tRNA(Gln) amidotransferase subunit A, chloroplastic/mitochondrial.